The chain runs to 358 residues: MEMTMRWFGSNADKIKLSEIAQVPGVKGVVGMIMDIPAGEIWPKERIKALKEEIEAAGLTLKVIESVNIHDDIKIGLPTRDKYIENYKETIRNLAEFGIEVICYNFMPVFDWLKSDLDYRLADNSQTMAFVARDIPANPQEIIDRVQAADGCFSLPGWEPERLSEVRGLFEAYKNVDEHKLRENFAYFLKAIIPTCEEVGIKMAVHPDDPPYPMFGLPRVVKNREDLDWICNVVDSPSNAITLCTGSIAEDPANNVYEIMAEFVKRDRIPFAHVRNIKFLPSGKKDFYEAPHMSKYGSLDMYKIMKAMYDNGFDGYIRPDHGRMIWGETGRPGYGLYDRALGASYLNGLWEALEKTNQ.

Belongs to the mannonate dehydratase family. Requires Fe(2+) as cofactor. The cofactor is Mn(2+).

It carries out the reaction D-mannonate = 2-dehydro-3-deoxy-D-gluconate + H2O. The protein operates within carbohydrate metabolism; pentose and glucuronate interconversion. Catalyzes the dehydration of D-mannonate. This Lactococcus lactis subsp. lactis (strain IL1403) (Streptococcus lactis) protein is Mannonate dehydratase.